We begin with the raw amino-acid sequence, 428 residues long: Trigger factor (428 aa).

In terms of domain architecture, PPIase FKBP-type spans 163–248; that stretch reads GDTAVIDFEG…VHEVKAKQLP (86 aa).

This sequence belongs to the FKBP-type PPIase family. Tig subfamily.

The protein localises to the cytoplasm. The catalysed reaction is [protein]-peptidylproline (omega=180) = [protein]-peptidylproline (omega=0). Its function is as follows. Involved in protein export. Acts as a chaperone by maintaining the newly synthesized protein in an open conformation. Functions as a peptidyl-prolyl cis-trans isomerase. The polypeptide is Trigger factor (Geobacillus thermodenitrificans (strain NG80-2)).